The chain runs to 118 residues: Small ribosomal subunit protein uS13 (118 aa).

Positions 94 to 118 are disordered; it reads SLPLRGQRTKTNARTRKGPRKPIRK.

This sequence belongs to the universal ribosomal protein uS13 family. In terms of assembly, part of the 30S ribosomal subunit. Forms a loose heterodimer with protein S19. Forms two bridges to the 50S subunit in the 70S ribosome.

Its function is as follows. Located at the top of the head of the 30S subunit, it contacts several helices of the 16S rRNA. In the 70S ribosome it contacts the 23S rRNA (bridge B1a) and protein L5 of the 50S subunit (bridge B1b), connecting the 2 subunits; these bridges are implicated in subunit movement. Contacts the tRNAs in the A and P-sites. The chain is Small ribosomal subunit protein uS13 from Shewanella frigidimarina (strain NCIMB 400).